We begin with the raw amino-acid sequence, 219 residues long: Proteasome subunit beta type-9 (219 aa).

Residues M1–G20 constitute a propeptide, removed in mature form. T21 acts as the Nucleophile in catalysis. N6-acetyllysine is present on residues K53 and K109.

The protein belongs to the peptidase T1B family. In terms of assembly, the 26S proteasome consists of a 20S proteasome core and two 19S regulatory subunits. The 20S proteasome core is composed of 28 subunits that are arranged in four stacked rings, resulting in a barrel-shaped structure. The two end rings are each formed by seven alpha subunits, and the two central rings are each formed by seven beta subunits. The catalytic chamber with the active sites is on the inside of the barrel. Component of the immunoproteasome, where it displaces the equivalent housekeeping subunit PSMB6. Component of the spermatoproteasome, a form of the proteasome specifically found in testis. Post-translationally, autocleaved. The resulting N-terminal Thr residue of the mature subunit is responsible for the nucleophile proteolytic activity.

The protein resides in the cytoplasm. The protein localises to the nucleus. The catalysed reaction is Cleavage of peptide bonds with very broad specificity.. Functionally, the proteasome is a multicatalytic proteinase complex which is characterized by its ability to cleave peptides with Arg, Phe, Tyr, Leu, and Glu adjacent to the leaving group at neutral or slightly basic pH. The proteasome has an ATP-dependent proteolytic activity. This subunit is involved in antigen processing to generate class I binding peptides. This Mus terricolor (Earth-colored mouse) protein is Proteasome subunit beta type-9 (Psmb9).